Consider the following 897-residue polypeptide: 3'-5' exonuclease DinG (897 aa).

In terms of domain architecture, Exonuclease spans 8–161; the sequence is VVDLETTGNQ…DEDAATTAKL (154 aa). The Helicase ATP-binding domain maps to 241–496; that stretch reads SKAVDQLGLT…KAIDQLEKQR (256 aa). An ATP-binding site is contributed by 276 to 283; it reads ASLGSGKS. Residues 448-451 carry the DEAH box motif; the sequence is DEAH. The Helicase C-terminal domain maps to 703–893; sequence NIDEYVASIV…QFGKLLRQIQ (191 aa).

It belongs to the helicase family. DinG subfamily. Type 2 sub-subfamily. In terms of assembly, monomer in solution.

The nuclease activity is inhibited by ATP or ADP. 3'-5' exonuclease acting on single-stranded DNA (ssDNA) and RNA (ssRNA) substrates. Displays ssDNA-stimulated ATPase activity, but lacks helicase activity. The chain is 3'-5' exonuclease DinG from Staphylococcus aureus (strain MRSA252).